We begin with the raw amino-acid sequence, 299 residues long: Phosphoribosylaminoimidazole-succinocarboxamide synthase (299 aa).

This sequence belongs to the SAICAR synthetase family.

It carries out the reaction 5-amino-1-(5-phospho-D-ribosyl)imidazole-4-carboxylate + L-aspartate + ATP = (2S)-2-[5-amino-1-(5-phospho-beta-D-ribosyl)imidazole-4-carboxamido]succinate + ADP + phosphate + 2 H(+). Its pathway is purine metabolism; IMP biosynthesis via de novo pathway; 5-amino-1-(5-phospho-D-ribosyl)imidazole-4-carboxamide from 5-amino-1-(5-phospho-D-ribosyl)imidazole-4-carboxylate: step 1/2. The polypeptide is Phosphoribosylaminoimidazole-succinocarboxamide synthase (Maridesulfovibrio salexigens (strain ATCC 14822 / DSM 2638 / NCIMB 8403 / VKM B-1763) (Desulfovibrio salexigens)).